The sequence spans 307 residues: Ribosomal protein L11 methyltransferase (307 aa).

Residues Thr154, Gly178, Asp200, and Asn242 each contribute to the S-adenosyl-L-methionine site.

The protein belongs to the methyltransferase superfamily. PrmA family.

It is found in the cytoplasm. It carries out the reaction L-lysyl-[protein] + 3 S-adenosyl-L-methionine = N(6),N(6),N(6)-trimethyl-L-lysyl-[protein] + 3 S-adenosyl-L-homocysteine + 3 H(+). Functionally, methylates ribosomal protein L11. In Syntrophotalea carbinolica (strain DSM 2380 / NBRC 103641 / GraBd1) (Pelobacter carbinolicus), this protein is Ribosomal protein L11 methyltransferase.